A 254-amino-acid chain; its full sequence is Glutamate racemase (254 aa).

Substrate is bound by residues 7 to 8 and 39 to 40; these read DS and YG. Cysteine 70 serves as the catalytic Proton donor/acceptor. 71–72 is a substrate binding site; that stretch reads NT. The Proton donor/acceptor role is filled by cysteine 178. 179–180 contributes to the substrate binding site; the sequence is TH.

Belongs to the aspartate/glutamate racemases family.

The enzyme catalyses L-glutamate = D-glutamate. The protein operates within cell wall biogenesis; peptidoglycan biosynthesis. Its function is as follows. Provides the (R)-glutamate required for cell wall biosynthesis. This is Glutamate racemase from Aquifex aeolicus (strain VF5).